Reading from the N-terminus, the 151-residue chain is Ribosomal RNA large subunit methyltransferase H (151 aa).

S-adenosyl-L-methionine-binding positions include Ala101 and 119 to 124 (LSEMTF).

This sequence belongs to the RNA methyltransferase RlmH family. Homodimer.

The protein localises to the cytoplasm. It catalyses the reaction pseudouridine(1915) in 23S rRNA + S-adenosyl-L-methionine = N(3)-methylpseudouridine(1915) in 23S rRNA + S-adenosyl-L-homocysteine + H(+). Functionally, specifically methylates the pseudouridine at position 1915 (m3Psi1915) in 23S rRNA. This Helicobacter pylori (strain G27) protein is Ribosomal RNA large subunit methyltransferase H.